A 62-amino-acid polypeptide reads, in one-letter code: Photosystem II reaction center protein Z (62 aa).

2 helical membrane-spanning segments follow: residues 8–28 (VLTA…VAYA) and 41–61 (YVGS…NFLV).

The protein belongs to the PsbZ family. In terms of assembly, PSII is composed of 1 copy each of membrane proteins PsbA, PsbB, PsbC, PsbD, PsbE, PsbF, PsbH, PsbI, PsbJ, PsbK, PsbL, PsbM, PsbT, PsbX, PsbY, PsbZ, Psb30/Ycf12, peripheral proteins PsbO, CyanoQ (PsbQ), PsbU, PsbV and a large number of cofactors. It forms dimeric complexes.

Its subcellular location is the cellular thylakoid membrane. In terms of biological role, may control the interaction of photosystem II (PSII) cores with the light-harvesting antenna, regulates electron flow through the 2 photosystem reaction centers. PSII is a light-driven water plastoquinone oxidoreductase, using light energy to abstract electrons from H(2)O, generating a proton gradient subsequently used for ATP formation. The polypeptide is Photosystem II reaction center protein Z (Crocosphaera subtropica (strain ATCC 51142 / BH68) (Cyanothece sp. (strain ATCC 51142))).